The following is a 607-amino-acid chain: MNKEERAKRQSKIRNFSIIAHIDHGKSTLADRILEKTNALTQREMKAQLLDSMDLERERGITIKLNAVQLNYKAKDGEEYILHLIDTPGHVDFTYEVSRSLAACEGAILVVDAAQGIEAQTLANVYLALDNNLEILPVINKIDLPSADPERVRQEVEDVIGLDASEAVLASAKAGIGIEEILEQIVEKVPAPTGDSEEPLQCMIFDSLYDPYRGVIAYIRVVNGTVKVGDKVRMMATGKEFEVTEVGVFTPKTTQRDELTVGDVGFLAASIKNVGDTRVGDTITHAKRPAAEPLAGYRKLNPMVFCGLYPIDSARYNDLRDALEKLELNDSALEFEPETSQALGFGFRCGFLGLLHMEIIQERIEREFKIDLITTAPSVIYKVFLTNGEDMIVDNPSNMPNPQTIDRVEEPFVKAAIMVPNDYVGAVMEICQGKRGTFIDMQYLDETRVTLTYEIPLSEIVYDFFDQLKSNTKGYASFDYELIGYKPSKLVKMDILLNSEQVDALSFIVHRDSAYDRGKVIVEKLKELIPRQQFEVPIQATIGNKVVARSTIKAMRKNVLAKCYGGDISRKRKLLDKQKEGKKRMKSVGSVEVPQEAFMAVLKMDDN.

A tr-type G domain is found at 11–193 (SKIRNFSIIA…QIVEKVPAPT (183 aa)). Residues 23-28 (DHGKST) and 140-143 (NKID) each bind GTP.

Belongs to the TRAFAC class translation factor GTPase superfamily. Classic translation factor GTPase family. LepA subfamily.

It is found in the cell membrane. It catalyses the reaction GTP + H2O = GDP + phosphate + H(+). Required for accurate and efficient protein synthesis under certain stress conditions. May act as a fidelity factor of the translation reaction, by catalyzing a one-codon backward translocation of tRNAs on improperly translocated ribosomes. Back-translocation proceeds from a post-translocation (POST) complex to a pre-translocation (PRE) complex, thus giving elongation factor G a second chance to translocate the tRNAs correctly. Binds to ribosomes in a GTP-dependent manner. The sequence is that of Elongation factor 4 from Bacillus cereus (strain Q1).